Consider the following 413-residue polypeptide: Serine hydroxymethyltransferase (413 aa).

Residues L117 and 121-123 each bind (6S)-5,6,7,8-tetrahydrofolate; that span reads GHL. The residue at position 226 (K226) is an N6-(pyridoxal phosphate)lysine. (6S)-5,6,7,8-tetrahydrofolate is bound by residues E239 and 349 to 351; that span reads SPF.

It belongs to the SHMT family. In terms of assembly, homodimer. Pyridoxal 5'-phosphate is required as a cofactor.

The protein resides in the cytoplasm. It catalyses the reaction (6R)-5,10-methylene-5,6,7,8-tetrahydrofolate + glycine + H2O = (6S)-5,6,7,8-tetrahydrofolate + L-serine. Its pathway is one-carbon metabolism; tetrahydrofolate interconversion. It participates in amino-acid biosynthesis; glycine biosynthesis; glycine from L-serine: step 1/1. Its function is as follows. Catalyzes the reversible interconversion of serine and glycine with tetrahydrofolate (THF) serving as the one-carbon carrier. This reaction serves as the major source of one-carbon groups required for the biosynthesis of purines, thymidylate, methionine, and other important biomolecules. Also exhibits THF-independent aldolase activity toward beta-hydroxyamino acids, producing glycine and aldehydes, via a retro-aldol mechanism. In Bacillus cereus (strain AH820), this protein is Serine hydroxymethyltransferase.